The following is a 307-amino-acid chain: Ribonuclease Z (307 aa).

The Zn(2+) site is built by histidine 63, histidine 65, aspartate 67, histidine 68, histidine 140, aspartate 211, and histidine 269. Residue aspartate 67 is the Proton acceptor of the active site.

It belongs to the RNase Z family. As to quaternary structure, homodimer. Zn(2+) serves as cofactor.

It carries out the reaction Endonucleolytic cleavage of RNA, removing extra 3' nucleotides from tRNA precursor, generating 3' termini of tRNAs. A 3'-hydroxy group is left at the tRNA terminus and a 5'-phosphoryl group is left at the trailer molecule.. Functionally, zinc phosphodiesterase, which displays some tRNA 3'-processing endonuclease activity. Probably involved in tRNA maturation, by removing a 3'-trailer from precursor tRNA. The polypeptide is Ribonuclease Z (Bacillus licheniformis (strain ATCC 14580 / DSM 13 / JCM 2505 / CCUG 7422 / NBRC 12200 / NCIMB 9375 / NCTC 10341 / NRRL NRS-1264 / Gibson 46)).